The following is a 421-amino-acid chain: Protein MucB (421 aa).

The 186-residue stretch at 2 to 187 (FALIDVNGMY…LPVAEVWGVG (186 aa)) folds into the UmuC domain.

This sequence belongs to the DNA polymerase type-Y family.

Involved in UV protection and mutation. This Salmonella typhimurium protein is Protein MucB (mucB).